A 374-amino-acid chain; its full sequence is SH2 domain-containing protein 2A (374 aa).

One can recognise an SH2 domain in the interval 116–207; that stretch reads WFHGFITRRE…PYGEILTQPL (92 aa). Residues 213 to 232 are disordered; sequence EPAGLSLRADSDSGSKRQDP. The span at 221-232 shows a compositional bias: basic and acidic residues; that stretch reads ADSDSGSKRQDP. The residue at position 237 (Ser237) is a Phosphoserine. The interval 241-301 is disordered; that stretch reads QQGQAQASGH…QAPPINPIYQ (61 aa). Polar residues predominate over residues 256–266; sequence ASQQKATSQAS. An SH3-binding motif is present at residues 267 to 273; the sequence is RPRPPIP. The segment covering 268-279 has biased composition (pro residues); that stretch reads PRPPIPAKPQLP. Ser316 bears the Phosphoserine mark. Disordered regions lie at residues 321–340 and 353–374; these read PSNI…IGHP and GQVR…GSPS.

Interacts with KDR. Interacts with p56-LCK, TXK and ITK. In terms of processing, phosphorylated on tyrosine residues upon TCR-stimulation. Expression limited to tissues of the immune system and, in particular, activated T-cells and natural killer cells. Expressed in the thymus, lymph node, and to a lesser extent, in the spleen and bone marrow. According to PubMed:10553045, also expressed in the lung.

It localises to the cytoplasm. It is found in the cell membrane. Could be a T-cell-specific adapter protein involved in the control of T-cell activation. May play a role in p56-LCK-mediated T-cell signaling. Could be involved in the regulation of responses to T-cell activation stimuli, specifically proliferation and lymphokine production. Interactions with ITK and TXK may provide important biochemical links of these two important kinases with other components in the T-cell activation machinery. This chain is SH2 domain-containing protein 2A (Sh2d2a), found in Mus musculus (Mouse).